Consider the following 285-residue polypeptide: 4-hydroxybenzoate octaprenyltransferase (285 aa).

8 helical membrane-spanning segments follow: residues 28-48, 86-106, 110-130, 133-153, 165-185, 210-230, 232-252, and 262-284; these read LWAM…WIFV, IAAW…FALV, NALT…YPFF, FFAI…PMAF, WLML…YAMV, IMLC…LLGL, WPYW…YTLI, and AAFR…AYAI.

Belongs to the UbiA prenyltransferase family. Mg(2+) serves as cofactor.

It localises to the cell inner membrane. The enzyme catalyses all-trans-octaprenyl diphosphate + 4-hydroxybenzoate = 4-hydroxy-3-(all-trans-octaprenyl)benzoate + diphosphate. Its pathway is cofactor biosynthesis; ubiquinone biosynthesis. Functionally, catalyzes the prenylation of para-hydroxybenzoate (PHB) with an all-trans polyprenyl group. Mediates the second step in the final reaction sequence of ubiquinone-8 (UQ-8) biosynthesis, which is the condensation of the polyisoprenoid side chain with PHB, generating the first membrane-bound Q intermediate 3-octaprenyl-4-hydroxybenzoate. The chain is 4-hydroxybenzoate octaprenyltransferase from Cupriavidus necator (strain ATCC 17699 / DSM 428 / KCTC 22496 / NCIMB 10442 / H16 / Stanier 337) (Ralstonia eutropha).